The chain runs to 463 residues: Abscisic acid 8'-hydroxylase 3 (463 aa).

The chain crosses the membrane as a helical span at residues 6 to 26 (LFLTLSAAALFLCLLRFIAGV). Cysteine 411 contacts heme.

This sequence belongs to the cytochrome P450 family. Requires heme as cofactor. As to expression, mainly expressed in flower buds, flowers, rosette leaves and roots. Lower expression in mature siliques and inflorescence stems. Not expressed in dry seeds.

It localises to the membrane. It carries out the reaction 2-cis-(+)-abscisate + reduced [NADPH--hemoprotein reductase] + O2 = (+)-8'-hydroxyabscisate + oxidized [NADPH--hemoprotein reductase] + H2O + H(+). The protein operates within plant hormone degradation; abscisic acid degradation. Its activity is regulated as follows. Inhibited by tetcyclcis, but not by metyrapone. In terms of biological role, involved in the oxidative degradation of abscisic acid, but not in the isomerization of the produced 8'-hydroxyabscisic acid (8'-OH-ABA) to (-)-phaseic acid (PA). Involved in the control of postgermination growth. In Arabidopsis thaliana (Mouse-ear cress), this protein is Abscisic acid 8'-hydroxylase 3 (CYP707A3).